We begin with the raw amino-acid sequence, 314 residues long: 4-hydroxy-3-methylbut-2-enyl diphosphate reductase (314 aa).

Cys-12 is a [4Fe-4S] cluster binding site. (2E)-4-hydroxy-3-methylbut-2-enyl diphosphate-binding residues include His-43 and His-81. 2 residues coordinate dimethylallyl diphosphate: His-43 and His-81. Isopentenyl diphosphate contacts are provided by His-43 and His-81. [4Fe-4S] cluster is bound at residue Cys-103. His-131 lines the (2E)-4-hydroxy-3-methylbut-2-enyl diphosphate pocket. Dimethylallyl diphosphate is bound at residue His-131. His-131 provides a ligand contact to isopentenyl diphosphate. Glu-133 serves as the catalytic Proton donor. Residue Thr-170 participates in (2E)-4-hydroxy-3-methylbut-2-enyl diphosphate binding. Cys-198 lines the [4Fe-4S] cluster pocket. Residues Ser-226, Asn-228, and Ser-271 each contribute to the (2E)-4-hydroxy-3-methylbut-2-enyl diphosphate site. Dimethylallyl diphosphate is bound by residues Ser-226, Asn-228, and Ser-271. Isopentenyl diphosphate-binding residues include Ser-226, Asn-228, and Ser-271.

The protein belongs to the IspH family. [4Fe-4S] cluster serves as cofactor.

The enzyme catalyses isopentenyl diphosphate + 2 oxidized [2Fe-2S]-[ferredoxin] + H2O = (2E)-4-hydroxy-3-methylbut-2-enyl diphosphate + 2 reduced [2Fe-2S]-[ferredoxin] + 2 H(+). It carries out the reaction dimethylallyl diphosphate + 2 oxidized [2Fe-2S]-[ferredoxin] + H2O = (2E)-4-hydroxy-3-methylbut-2-enyl diphosphate + 2 reduced [2Fe-2S]-[ferredoxin] + 2 H(+). Its pathway is isoprenoid biosynthesis; dimethylallyl diphosphate biosynthesis; dimethylallyl diphosphate from (2E)-4-hydroxy-3-methylbutenyl diphosphate: step 1/1. It participates in isoprenoid biosynthesis; isopentenyl diphosphate biosynthesis via DXP pathway; isopentenyl diphosphate from 1-deoxy-D-xylulose 5-phosphate: step 6/6. In terms of biological role, catalyzes the conversion of 1-hydroxy-2-methyl-2-(E)-butenyl 4-diphosphate (HMBPP) into a mixture of isopentenyl diphosphate (IPP) and dimethylallyl diphosphate (DMAPP). Acts in the terminal step of the DOXP/MEP pathway for isoprenoid precursor biosynthesis. This Bacillus subtilis (strain 168) protein is 4-hydroxy-3-methylbut-2-enyl diphosphate reductase.